A 337-amino-acid chain; its full sequence is Basic membrane protein A2 (337 aa).

Positions 1 to 17 are cleaved as a signal peptide; sequence MNKLLLLILFECIIFLS. Cys-18 carries the N-palmitoyl cysteine lipid modification. Cys-18 is lipidated: S-diacylglycerol cysteine.

This sequence belongs to the BMP lipoprotein family. As to quaternary structure, monomer.

It is found in the cell inner membrane. In terms of biological role, immunogenic protein. May be part of an ABC-type nucleoside uptake system involved in the purine salvage pathway. This chain is Basic membrane protein A2 (bmpA2), found in Borrelia garinii subsp. bavariensis (strain ATCC BAA-2496 / DSM 23469 / PBi) (Borreliella bavariensis).